The chain runs to 464 residues: Protein FAM90A24 (464 aa).

Disordered regions lie at residues 1–42 (MMAR…DPRL), 69–389 (VPAT…HDGA), and 415–437 (HSPE…SEAP). 2 stretches are compositionally biased toward basic and acidic residues: residues 74–89 (GKKE…KPRG) and 97–114 (NKDK…DPQR). Positions 180–197 (LASLSPLRKASLSSSSSL) are enriched in low complexity.

It belongs to the FAM90 family.

This chain is Protein FAM90A24, found in Homo sapiens (Human).